The following is a 310-amino-acid chain: Homoserine kinase (310 aa).

91–101 (PIGSGLGSSAC) serves as a coordination point for ATP.

The protein belongs to the GHMP kinase family. Homoserine kinase subfamily.

It localises to the cytoplasm. It catalyses the reaction L-homoserine + ATP = O-phospho-L-homoserine + ADP + H(+). The protein operates within amino-acid biosynthesis; L-threonine biosynthesis; L-threonine from L-aspartate: step 4/5. Its function is as follows. Catalyzes the ATP-dependent phosphorylation of L-homoserine to L-homoserine phosphate. This chain is Homoserine kinase, found in Escherichia coli (strain SMS-3-5 / SECEC).